Reading from the N-terminus, the 720-residue chain is MIYQGETLSVRYLDDGIAELNLNAPGAVNKFDLKTLECLNEALNALYQQSDLKGLLITSDKDAFIVGADITEFLGLFAKPAEELSQWLTRANDIFNKLEDLPVPTLSAINGHALGGGCECVLATDFRLADITARIGLPETRLGIMPGFGGTVRLPRLLGADSAMEIITAGKDKKAQDALKLGLVDAVVAPTALKDAALSMIKDAIAGKLDWQKRRAQKKAPLTLNKIEATMSFTMAKAMVAQVAGKHYPAPMTAVIAIEAAARMSRDEALVVENKHFITLAKTDVAQSLVGIFLNDQYIKGKAKKAAKEGQPTKKGVVLGAGIMGGGIAYQSALKGVPVLMKDIAVPSLDLGMAEAAKLLNKQLERGRIDGVKMAKVLSGITPSLHYAGAEDADIVVEAVVENPKIKAAVLAEVESNVSDTTVIASNTSTIPINLLAQSLKRPENFCGMHFFNPVHRMPLVEIIRGEHTSEETISRVVAYAAKMGKSPIVVNDCPGFFVNRVLFPYFAGFSLLLRDGADFTQVDKVMEKQFGWPMGPAYLLDVVGIDTAHHAQAVMAEGFPDRMGKNYKDAVDVMFEQQRFGQKNGNGFFAYSVDRRGKPKKNVDPAVAELLAPVLGAATDFTSDEIIARMMIPMINEVVRCLEECIIATPAEADMALVYGLGFPPFRGGVFRYIDTLGLAEYVAMADKFAHLGAVYEVPTGLREKAAKGESYYTQQVNA.

The interval Met1 to Ala189 is enoyl-CoA hydratase/isomerase. Residue Asp296 participates in substrate binding. Residues Gln311–Ala720 form a 3-hydroxyacyl-CoA dehydrogenase region. NAD(+) contacts are provided by residues Met324, Asp343, Val400–Glu402, Lys407, and Ser429. The For 3-hydroxyacyl-CoA dehydrogenase activity role is filled by His450. NAD(+) is bound at residue Asn453. Asn500 and Tyr660 together coordinate substrate.

In the N-terminal section; belongs to the enoyl-CoA hydratase/isomerase family. It in the C-terminal section; belongs to the 3-hydroxyacyl-CoA dehydrogenase family. In terms of assembly, heterotetramer of two alpha chains (FadB) and two beta chains (FadA).

It carries out the reaction a (3S)-3-hydroxyacyl-CoA + NAD(+) = a 3-oxoacyl-CoA + NADH + H(+). The enzyme catalyses a (3S)-3-hydroxyacyl-CoA = a (2E)-enoyl-CoA + H2O. It catalyses the reaction a 4-saturated-(3S)-3-hydroxyacyl-CoA = a (3E)-enoyl-CoA + H2O. The catalysed reaction is (3S)-3-hydroxybutanoyl-CoA = (3R)-3-hydroxybutanoyl-CoA. It carries out the reaction a (3Z)-enoyl-CoA = a 4-saturated (2E)-enoyl-CoA. The enzyme catalyses a (3E)-enoyl-CoA = a 4-saturated (2E)-enoyl-CoA. It functions in the pathway lipid metabolism; fatty acid beta-oxidation. Involved in the aerobic and anaerobic degradation of long-chain fatty acids via beta-oxidation cycle. Catalyzes the formation of 3-oxoacyl-CoA from enoyl-CoA via L-3-hydroxyacyl-CoA. It can also use D-3-hydroxyacyl-CoA and cis-3-enoyl-CoA as substrate. This chain is Fatty acid oxidation complex subunit alpha, found in Photobacterium profundum (strain SS9).